The following is a 168-amino-acid chain: Photosystem I assembly protein Ycf3 (168 aa).

TPR repeat units follow at residues 35 to 68, 72 to 105, and 120 to 153; these read AFTY…EIDP, SYIL…NPFL, and GEQA…TPGN.

The protein belongs to the Ycf3 family.

It is found in the plastid. It localises to the chloroplast thylakoid membrane. Functionally, essential for the assembly of the photosystem I (PSI) complex. May act as a chaperone-like factor to guide the assembly of the PSI subunits. The polypeptide is Photosystem I assembly protein Ycf3 (Acorus calamus var. americanus (American sweet flag)).